Here is a 270-residue protein sequence, read N- to C-terminus: Putative phosphoenolpyruvate synthase regulatory protein (270 aa).

150 to 157 (GVSRCGKT) provides a ligand contact to ADP.

This sequence belongs to the pyruvate, phosphate/water dikinase regulatory protein family. PSRP subfamily.

The enzyme catalyses [pyruvate, water dikinase] + ADP = [pyruvate, water dikinase]-phosphate + AMP + H(+). It carries out the reaction [pyruvate, water dikinase]-phosphate + phosphate + H(+) = [pyruvate, water dikinase] + diphosphate. Functionally, bifunctional serine/threonine kinase and phosphorylase involved in the regulation of the phosphoenolpyruvate synthase (PEPS) by catalyzing its phosphorylation/dephosphorylation. The protein is Putative phosphoenolpyruvate synthase regulatory protein of Shewanella sp. (strain ANA-3).